The sequence spans 92 residues: Small ribosomal subunit protein uS19 (92 aa).

The protein belongs to the universal ribosomal protein uS19 family.

Its function is as follows. Protein S19 forms a complex with S13 that binds strongly to the 16S ribosomal RNA. This is Small ribosomal subunit protein uS19 from Methylobacterium radiotolerans (strain ATCC 27329 / DSM 1819 / JCM 2831 / NBRC 15690 / NCIMB 10815 / 0-1).